The following is a 314-amino-acid chain: MSSKANHAKTVICGIINVTPDSFSDGGQFFALEQALQQARKLIAEGASMLDIGGESTRPGSSYVEIEEEIQRVVPVIKAIRKESDVLISIDTWKSQVAEAALAAGADLVNDITGLMGDEKMAYVVAEARAKVVIMFNPVMARPQHPSSLIFPHFGFGQTFTEKELADFETLPIEDLMVAFFERALARAAEAGIAPENILLDPGIGFGLTKKENLLLLRDLDKLHQKGYPIFLGVSRKRFVINILEENGFEVNPETELGFRNRDTASAHVTSIAARQGVEVVRVHDVASHRMAVEIASAIRLADEAENLDLKQYK.

One can recognise a Pterin-binding domain in the interval 10–294 (TVICGIINVT…DVASHRMAVE (285 aa)). Residue Asn-17 participates in Mg(2+) binding. Residues Thr-57, Asp-91, Asn-110, Asp-201, Lys-237, and 282–284 (RVH) contribute to the (7,8-dihydropterin-6-yl)methyl diphosphate site.

It belongs to the DHPS family. As to quaternary structure, homodimer or homotrimer. Mg(2+) is required as a cofactor.

The catalysed reaction is (7,8-dihydropterin-6-yl)methyl diphosphate + 4-aminobenzoate = 7,8-dihydropteroate + diphosphate. It functions in the pathway cofactor biosynthesis; tetrahydrofolate biosynthesis; 7,8-dihydrofolate from 2-amino-4-hydroxy-6-hydroxymethyl-7,8-dihydropteridine diphosphate and 4-aminobenzoate: step 1/2. Catalyzes the condensation of para-aminobenzoate (pABA) with 6-hydroxymethyl-7,8-dihydropterin diphosphate (DHPt-PP) to form 7,8-dihydropteroate (H2Pte), the immediate precursor of folate derivatives. The sequence is that of Dihydropteroate synthase (sulA) from Streptococcus pneumoniae serotype 4 (strain ATCC BAA-334 / TIGR4).